An 85-amino-acid polypeptide reads, in one-letter code: U4-theraphotoxin-Hhn1c (85 aa).

A signal peptide spans 1 to 22 (MKVTLIAIVTCAAVLVLHTTAA). A propeptide spanning residues 23 to 48 (EELEAESQLMEVGMPDTELAAVDEER) is cleaved from the precursor. 3 disulfides stabilise this stretch: C52-C66, C56-C77, and C71-C82.

Belongs to the neurotoxin 12 (Hwtx-2) family. 02 (Hwtx-2) subfamily. Expressed by the venom gland.

The protein localises to the secreted. Postsynaptic neurotoxin. This Cyriopagopus hainanus (Chinese bird spider) protein is U4-theraphotoxin-Hhn1c.